A 379-amino-acid chain; its full sequence is Cytochrome b (379 aa).

The next 4 helical transmembrane spans lie at 33–53 (FGSL…FLAM), 77–98 (WLIR…FIHV), 113–133 (WNIG…GYVL), and 178–198 (FFAF…VHLL). Heme b contacts are provided by His-83 and His-97. Heme b contacts are provided by His-182 and His-196. Residue His-201 coordinates a ubiquinone. 4 consecutive transmembrane segments (helical) span residues 226–246 (TKDL…ALFF), 288–308 (LGGV…PLLN), 320–340 (VTQV…WIGG), and 347–367 (FTMI…ILIP).

This sequence belongs to the cytochrome b family. As to quaternary structure, the cytochrome bc1 complex contains 11 subunits: 3 respiratory subunits (MT-CYB, CYC1 and UQCRFS1), 2 core proteins (UQCRC1 and UQCRC2) and 6 low-molecular weight proteins (UQCRH/QCR6, UQCRB/QCR7, UQCRQ/QCR8, UQCR10/QCR9, UQCR11/QCR10 and a cleavage product of UQCRFS1). This cytochrome bc1 complex then forms a dimer. Requires heme b as cofactor.

The protein resides in the mitochondrion inner membrane. In terms of biological role, component of the ubiquinol-cytochrome c reductase complex (complex III or cytochrome b-c1 complex) that is part of the mitochondrial respiratory chain. The b-c1 complex mediates electron transfer from ubiquinol to cytochrome c. Contributes to the generation of a proton gradient across the mitochondrial membrane that is then used for ATP synthesis. This Akodon lutescens puer (Altiplano grass mouse) protein is Cytochrome b (MT-CYB).